We begin with the raw amino-acid sequence, 709 residues long: UV-stimulated scaffold protein A (709 aa).

Over residues 1–10 (MDQKLSKLVE) the composition is skewed to basic and acidic residues. A disordered region spans residues 1–20 (MDQKLSKLVEELTTSGEPRL). The interval 2-145 (DQKLSKLVEE…HFLRHNKKVD (144 aa)) is VHS-like. Residues 165-199 (KHLDKIYQERASQAEREMQEMSGEIESCLTEVESC) adopt a coiled-coil conformation. Disordered stretches follow at residues 230–289 (SCAG…DSDL) and 386–406 (EGGE…EDDE). Positions 280–289 (PSDEDEDSDL) are enriched in acidic residues. Residues Ser281 and Ser287 each carry the phosphoserine modification. Residues 386 to 395 (EGGERRRTEA) are compositionally biased toward basic and acidic residues. Residues 397–406 (GDAEEDEDDE) show a composition bias toward acidic residues. A Glycyl lysine isopeptide (Lys-Gly) (interchain with G-Cter in ubiquitin) cross-link involves residue Lys414. Positions 469–495 (DHLPPPSSASPSRALPEPQEAQKLAAE) are disordered. A compositionally biased stretch (low complexity) spans 477 to 486 (ASPSRALPEP). A UVSSA-type zinc finger spans residues 564 to 591 (QHWCRAPRPDGRLCERQDRLKCPFHGKI). Positions 567, 577, 585, and 588 each coordinate Zn(2+). The tract at residues 588-655 (HGKIVPRDDE…GKGRGKKRRY (68 aa)) is disordered. A compositionally biased stretch (basic and acidic residues) spans 592 to 632 (VPRDDEGRPLDPEDRAREQRRQLQKQERPEWQDPELMRDVE). The span at 646-655 (GKGRGKKRRY) shows a compositional bias: basic residues.

The protein belongs to the UVSSA family. Interacts with the elongating form of RNA polymerase II (RNA pol IIo) during transcription stress. Interacts with the TFIIH complex during transcription stress. Interacts with ERCC6. Interacts with ERCC8. Interacts with USP7. In terms of processing, monoubiquitinated at Lys-414 in response to transcription stress; this promotes efficient transfer of TFIIH to stalled RNA polymerase II.

It is found in the chromosome. Factor involved in transcription-coupled nucleotide excision repair (TC-NER), a mechanism that rapidly removes RNA polymerase II-blocking lesions from the transcribed strand of active genes. Acts as a key adapter that promotes recruitment of factors involved in TC-NER. Facilitates the ubiquitination of the elongating form of RNA polymerase II (RNA pol IIo) at DNA damage sites, thereby promoting RNA pol IIo backtracking and access by the TC-NER machinery to lesion sites. Also promotes stabilization of ERCC6/CSB by recruiting deubiquitinating enzyme USP7 to TC-NER complexes, preventing UV-induced degradation of ERCC6 by the proteasome. Mediates the recruitment of the TFIIH complex and other factors that are required for nucleotide excision repair to RNA polymerase II. Also required to inactivate stalled RNA polymerase II by blocking the access of TCEA1/TFIIS, thereby preventing reactivation of RNA polymerase II. Not involved in processing oxidative damage. The protein is UV-stimulated scaffold protein A of Homo sapiens (Human).